A 362-amino-acid polypeptide reads, in one-letter code: Glutamate--cysteine ligase (362 aa).

Belongs to the glutamate--cysteine ligase type 2 family. YbdK subfamily.

The catalysed reaction is L-cysteine + L-glutamate + ATP = gamma-L-glutamyl-L-cysteine + ADP + phosphate + H(+). Catalyzes the synthesis of gamma-glutamylcysteine (gamma-GC), the main low-molecular-weight thiol compound instead of glutathione in halophilic archaea. This chain is Glutamate--cysteine ligase, found in Natronomonas pharaonis (strain ATCC 35678 / DSM 2160 / CIP 103997 / JCM 8858 / NBRC 14720 / NCIMB 2260 / Gabara) (Halobacterium pharaonis).